The following is a 550-amino-acid chain: Hydroxylamine reductase (550 aa).

Positions 3, 6, 18, and 25 each coordinate [2Fe-2S] cluster. The hybrid [4Fe-2O-2S] cluster site is built by His249, Glu273, Cys317, Cys405, Cys433, Cys458, Glu492, and Lys494. Position 405 is a cysteine persulfide (Cys405).

Belongs to the HCP family. It depends on [2Fe-2S] cluster as a cofactor. Requires hybrid [4Fe-2O-2S] cluster as cofactor.

The protein resides in the cytoplasm. It carries out the reaction A + NH4(+) + H2O = hydroxylamine + AH2 + H(+). In terms of biological role, catalyzes the reduction of hydroxylamine to form NH(3) and H(2)O. The sequence is that of Hydroxylamine reductase from Escherichia coli O139:H28 (strain E24377A / ETEC).